The sequence spans 311 residues: uncharacterized protein (311 aa).

The next 10 helical transmembrane spans lie at 13–33 (STAV…GFFS), 41–61 (FELV…CWLA), 76–96 (LQTL…FKSF), 103–123 (IAIS…SFFY), 128–148 (NVIS…ISGI), 157–177 (LMGS…FTTL), 192–212 (FLQT…GAFA), 218–238 (NWIM…LLFF), 248–268 (FISI…TVFT), and 272–292 (PDLY…LTLV). EamA domains follow at residues 24–147 (VIFG…LISG) and 166–292 (VLAA…LTLV).

It belongs to the EamA transporter family.

It is found in the cell membrane. This is an uncharacterized protein from Bacillus subtilis (strain 168).